A 120-amino-acid chain; its full sequence is Putative pterin-4-alpha-carbinolamine dehydratase (120 aa).

This sequence belongs to the pterin-4-alpha-carbinolamine dehydratase family.

It carries out the reaction (4aS,6R)-4a-hydroxy-L-erythro-5,6,7,8-tetrahydrobiopterin = (6R)-L-erythro-6,7-dihydrobiopterin + H2O. The sequence is that of Putative pterin-4-alpha-carbinolamine dehydratase from Bdellovibrio bacteriovorus (strain ATCC 15356 / DSM 50701 / NCIMB 9529 / HD100).